A 923-amino-acid chain; its full sequence is Tyrosine-protein kinase receptor torso (923 aa).

The first 20 residues, 1–20 (MLIFYAKYAFIFWFFVGSNQ), serve as a signal peptide directing secretion. The Extracellular portion of the chain corresponds to 21-399 (GEMLLMDKIS…VLLSEGNMVK (379 aa)). N-linked (GlcNAc...) asparagine glycans are attached at residues Asn-37, Asn-63, Asn-107, Asn-142, Asn-146, Asn-287, Asn-298, Asn-314, Asn-326, Asn-342, Asn-348, and Asn-377. Residues 400–420 (LVLFIIVPICCILMLCSLTFC) form a helical membrane-spanning segment. The Cytoplasmic segment spans residues 421–923 (RRNRSEVQAL…EEELYLEPLN (503 aa)). In terms of domain architecture, Protein kinase spans 475 to 874 (VLLQDVLGEG…TFSALKHRLG (400 aa)). ATP-binding positions include 481–489 (LGEGAFGLV) and Lys-502. Residue Ser-608 is modified to Phosphoserine. The tract at residues 656 to 687 (YIPKTAEAPKDRPKRKLKPQPKKDSKQDFKSD) is disordered. Positions 676–687 (PKKDSKQDFKSD) are enriched in basic and acidic residues. Residue Asp-741 is the Proton acceptor of the active site.

The protein belongs to the protein kinase superfamily. Tyr protein kinase family. Mg(2+) serves as cofactor. May be auto-phosphorylated on tyrosine residues.

It is found in the membrane. The enzyme catalyses L-tyrosyl-[protein] + ATP = O-phospho-L-tyrosyl-[protein] + ADP + H(+). In terms of biological role, probable receptor tyrosine kinase which is required for determination of anterior and posterior terminal structures in the embryo. During postembryonic development, involved in the initiation of metamorphosis probably by inducing the production of ecdysone in response to prothoracicotropic hormone Ptth. Binding to Ptth stimulates activation of canonical MAPK signaling leading to ERK phosphorylation. The chain is Tyrosine-protein kinase receptor torso (tor) from Drosophila melanogaster (Fruit fly).